The primary structure comprises 36 residues: Pancreatic polypeptide (36 aa).

Tyrosine 36 carries the tyrosine amide modification.

The protein belongs to the NPY family.

Its subcellular location is the secreted. Functionally, hormone secreted by pancreatic cells that acts as a regulator of pancreatic and gastrointestinal functions probably by signaling through the G protein-coupled receptor NPY4R2. The polypeptide is Pancreatic polypeptide (PPY) (Ceratotherium simum (White rhinoceros)).